Consider the following 204-residue polypeptide: Oxidoreductase iacF (204 aa).

The protein belongs to the oxidoreductase OpS7 family.

It participates in secondary metabolite biosynthesis. In terms of biological role, oxidoreductase; part of the gene cluster that mediates the biosynthesis of iso-A82775C, a enylepoxycyclohexane and biosynthetic precursor of the chloropestolide anticancer natural products. Within the cluster, the prenyltransferase iacE prenylates siccayne to generate pestalodiol E, using dimethylallyl diphosphate (DMAPP) as cosubstrate. The probable oxidoreductase iacF is then involved in the epoxidation of pestalodiol F to pestalodiol F, which is further converted to pestalofone A by the short-chain dehydrogenase/reductase iacG. Iso-A82775C is subsequently generated from pestalofone A by the short-chain dehydrogenase/reductase iacC. Iso-A82775C is further condensed with maldoxin via a Diels-Alder reaction to produce the anticancer natural products chloropestolides A to E. In Pestalotiopsis fici (strain W106-1 / CGMCC3.15140), this protein is Oxidoreductase iacF.